Consider the following 141-residue polypeptide: Large ribosomal subunit protein bL17 (141 aa).

It belongs to the bacterial ribosomal protein bL17 family. In terms of assembly, part of the 50S ribosomal subunit. Contacts protein L32.

This is Large ribosomal subunit protein bL17 from Sinorhizobium fredii (strain NBRC 101917 / NGR234).